A 332-amino-acid chain; its full sequence is DNA-directed RNA polymerase subunit alpha (332 aa).

The segment at 1 to 244 is alpha N-terminal domain (alpha-NTD); sequence MKKHAKVYYS…AHLNLLADVE (244 aa). Positions 259–332 are alpha C-terminal domain (alpha-CTD); it reads IKEEPIRRFS…NYKNENKGEN (74 aa).

It belongs to the RNA polymerase alpha chain family. As to quaternary structure, homodimer. The RNAP catalytic core consists of 2 alpha, 1 beta, 1 beta' and 1 omega subunit. When a sigma factor is associated with the core the holoenzyme is formed, which can initiate transcription.

It catalyses the reaction RNA(n) + a ribonucleoside 5'-triphosphate = RNA(n+1) + diphosphate. Its function is as follows. DNA-dependent RNA polymerase catalyzes the transcription of DNA into RNA using the four ribonucleoside triphosphates as substrates. The protein is DNA-directed RNA polymerase subunit alpha of Mesomycoplasma hyopneumoniae (strain 232) (Mycoplasma hyopneumoniae).